Here is a 597-residue protein sequence, read N- to C-terminus: Cytosolic Fe-S cluster assembly factor nar1 (597 aa).

[4Fe-4S] cluster is bound by residues Cys-20, Cys-61, Cys-64, Cys-67, Cys-209, and Cys-264. The disordered stretch occupies residues 419–447; that stretch reads PARASRLPGARQSATSAGGSRRQLASRNA. Polar residues predominate over residues 430–447; it reads QSATSAGGSRRQLASRNA. [4Fe-4S] cluster-binding residues include Cys-464 and Cys-468. A disordered region spans residues 482–504; it reads EAASNMSVESQTEPPEAALKPTP. The segment covering 485 to 494 has biased composition (polar residues); it reads SNMSVESQTE.

It belongs to the NARF family.

Functionally, component of the cytosolic Fe/S protein assembly machinery. Required for maturation of extramitochondrial Fe/S proteins. May play a role in the transfer of pre-assembled Fe/S clusters to target apoproteins. This is Cytosolic Fe-S cluster assembly factor nar1 (nar1) from Aspergillus clavatus (strain ATCC 1007 / CBS 513.65 / DSM 816 / NCTC 3887 / NRRL 1 / QM 1276 / 107).